A 145-amino-acid chain; its full sequence is D-aminoacyl-tRNA deacylase (145 aa).

Residues 137-138 (GP) carry the Gly-cisPro motif, important for rejection of L-amino acids motif.

The protein belongs to the DTD family. Homodimer.

Its subcellular location is the cytoplasm. The enzyme catalyses glycyl-tRNA(Ala) + H2O = tRNA(Ala) + glycine + H(+). It carries out the reaction a D-aminoacyl-tRNA + H2O = a tRNA + a D-alpha-amino acid + H(+). Functionally, an aminoacyl-tRNA editing enzyme that deacylates mischarged D-aminoacyl-tRNAs. Also deacylates mischarged glycyl-tRNA(Ala), protecting cells against glycine mischarging by AlaRS. Acts via tRNA-based rather than protein-based catalysis; rejects L-amino acids rather than detecting D-amino acids in the active site. By recycling D-aminoacyl-tRNA to D-amino acids and free tRNA molecules, this enzyme counteracts the toxicity associated with the formation of D-aminoacyl-tRNA entities in vivo and helps enforce protein L-homochirality. This Rhodococcus jostii (strain RHA1) protein is D-aminoacyl-tRNA deacylase.